Reading from the N-terminus, the 38-residue chain is MKVRASVKRICRNCKVIKRNGVVRVICSSDPKHKQRQG.

This sequence belongs to the bacterial ribosomal protein bL36 family.

The polypeptide is Large ribosomal subunit protein bL36 (Pseudoalteromonas atlantica (strain T6c / ATCC BAA-1087)).